Consider the following 117-residue polypeptide: Large ribosomal subunit protein bL19 (117 aa).

The protein belongs to the bacterial ribosomal protein bL19 family.

Functionally, this protein is located at the 30S-50S ribosomal subunit interface and may play a role in the structure and function of the aminoacyl-tRNA binding site. This Photorhabdus laumondii subsp. laumondii (strain DSM 15139 / CIP 105565 / TT01) (Photorhabdus luminescens subsp. laumondii) protein is Large ribosomal subunit protein bL19.